Here is a 326-residue protein sequence, read N- to C-terminus: DNA-directed RNA polymerase subunit alpha (326 aa).

Positions 1-231 (MQTALLKPKI…DQLSVFAALE (231 aa)) are alpha N-terminal domain (alpha-NTD). The alpha C-terminal domain (alpha-CTD) stretch occupies residues 247-326 (IDPILLRPVD…ENWPPAGLEK (80 aa)).

This sequence belongs to the RNA polymerase alpha chain family. Homodimer. The RNAP catalytic core consists of 2 alpha, 1 beta, 1 beta' and 1 omega subunit. When a sigma factor is associated with the core the holoenzyme is formed, which can initiate transcription.

It catalyses the reaction RNA(n) + a ribonucleoside 5'-triphosphate = RNA(n+1) + diphosphate. Its function is as follows. DNA-dependent RNA polymerase catalyzes the transcription of DNA into RNA using the four ribonucleoside triphosphates as substrates. This is DNA-directed RNA polymerase subunit alpha from Cupriavidus necator (strain ATCC 17699 / DSM 428 / KCTC 22496 / NCIMB 10442 / H16 / Stanier 337) (Ralstonia eutropha).